We begin with the raw amino-acid sequence, 4699 residues long: Fat-like cadherin-related tumor suppressor homolog (4699 aa).

An N-terminal signal peptide occupies residues 1–38 (MFTMKIKKYVTPVKRKAFTILQWISLLCSLWLIPTVQS). The Extracellular segment spans residues 39-4285 (KADEKHTATL…KNFSIEHISG (4247 aa)). Cadherin domains follow at residues 63–183 (SHSV…SPLF), 184–291 (YPTQ…APEI), 288–400 (APEI…IPIF), 401–507 (TQEI…DPIF), 508–613 (ENVN…RPQF), 614–716 (ERVN…SSIL), 773–877 (VNFP…RPVI), 878–980 (QKTL…APVF), 981–1088 (GVQE…APEF), 1089–1198 (DDFV…KPVY), 1194–1299 (DKPV…SPEF), 1300–1405 (DQRV…APLI), 1408–1506 (KTSE…PPQF), 1507–1612 (AKDV…HPEF), 1613–1717 (TAKI…PPKF), 1718–1815 (PTNN…IPYF), 1816–1932 (VQNE…PPVF), 1933–2033 (NERE…NFAF), 2034–2140 (QRES…CPLF), 2141–2241 (VNMP…MPVF), 2242–2341 (EKQF…YPEI), 2342–2449 (ESDI…APCF), 2450–2551 (VEPS…SPLF), 2552–2654 (DQST…VPYF), 2655–2763 (LLKE…IPTF), 2764–2860 (EKSS…YPKF), 2861–2967 (DNTF…APVF), 2968–3072 (KLPI…KPRY), 3068–3169 (LKPR…MPIF), 3170–3273 (SMAQ…PPEF), 3274–3378 (SMRQ…SPTF), 3379–3483 (LQNL…APIF), 3484–3588 (SSSN…PPIV), and 3589–3696 (TPLE…VIRF). Residues Asn-68 and Asn-159 are each glycosylated (N-linked (GlcNAc...) asparagine). N-linked (GlcNAc...) asparagine glycosylation occurs at Asn-367. Residues Asn-782, Asn-846, and Asn-926 are each glycosylated (N-linked (GlcNAc...) asparagine). N-linked (GlcNAc...) asparagine glycans are attached at residues Asn-1109, Asn-1201, Asn-1315, Asn-1442, Asn-1476, and Asn-1514. Cystine bridges form between Cys-3807–Cys-3819, Cys-3814–Cys-3851, Cys-3853–Cys-3862, Cys-3869–Cys-3880, Cys-3874–Cys-3891, Cys-3893–Cys-3902, Cys-4071–Cys-4105, Cys-4117–Cys-4128, Cys-4122–Cys-4138, Cys-4140–Cys-4149, Cys-4156–Cys-4167, Cys-4161–Cys-4177, Cys-4179–Cys-4188, Cys-4194–Cys-4205, Cys-4199–Cys-4214, Cys-4216–Cys-4224, Cys-4231–Cys-4242, Cys-4236–Cys-4251, and Cys-4253–Cys-4262. One can recognise an EGF-like 1 domain in the interval 3865-3903 (TVNACSTDPCSPQRICMPSGSALGYQCVCPKGFSGTYCE). In terms of domain architecture, Laminin G-like spans 3921-4105 (AVSFGGKSYA…KRFTNVEFKC (185 aa)). EGF-like domains lie at 4113-4150 (RLGI…KHCE), 4152-4189 (DLDP…KRCE), 4190-4225 (YGKF…PTCE), and 4227-4263 (DVDE…ASCG). The chain crosses the membrane as a helical span at residues 4286 to 4306 (IISGVAVVLVIISCVLCCVVL). Topologically, residues 4307-4699 (KRSSSSKRRN…EFLPQQQTNN (393 aa)) are cytoplasmic.

Localizes where basal actin filaments terminate.

It localises to the cell membrane. Its function is as follows. Required for the planar polarity of actin filament orientation at the basal side of ovarian follicle cells. Required for proper egg chamber shape and elongation of the egg chamber during oogenesis. Required for the correct planar polarization of Rab10 within the basal follicle cell epithelium and is therefore indirectly involved in the Rab10-dependent remodeling of the basal membrane during egg chamber elongation. This is Fat-like cadherin-related tumor suppressor homolog (kug) from Drosophila melanogaster (Fruit fly).